Consider the following 329-residue polypeptide: GTP 3',8-cyclase (329 aa).

Residues 1–229 (MNPVDYLRIS…ESTIKGNGPA (229 aa)) enclose the Radical SAM core domain. Residue arginine 8 participates in GTP binding. [4Fe-4S] cluster-binding residues include cysteine 15 and cysteine 19. Position 21 (tyrosine 21) interacts with S-adenosyl-L-methionine. [4Fe-4S] cluster is bound at residue cysteine 22. Arginine 60 lines the GTP pocket. Position 64 (glycine 64) interacts with S-adenosyl-L-methionine. Threonine 91 lines the GTP pocket. Serine 115 provides a ligand contact to S-adenosyl-L-methionine. Lysine 155 is a binding site for GTP. Methionine 189 contributes to the S-adenosyl-L-methionine binding site. The [4Fe-4S] cluster site is built by cysteine 252 and cysteine 255. 257–259 (RMR) is a GTP binding site. Cysteine 269 is a binding site for [4Fe-4S] cluster.

It belongs to the radical SAM superfamily. MoaA family. In terms of assembly, monomer and homodimer. Requires [4Fe-4S] cluster as cofactor.

The catalysed reaction is GTP + AH2 + S-adenosyl-L-methionine = (8S)-3',8-cyclo-7,8-dihydroguanosine 5'-triphosphate + 5'-deoxyadenosine + L-methionine + A + H(+). Its pathway is cofactor biosynthesis; molybdopterin biosynthesis. Its function is as follows. Catalyzes the cyclization of GTP to (8S)-3',8-cyclo-7,8-dihydroguanosine 5'-triphosphate. This Rippkaea orientalis (strain PCC 8801 / RF-1) (Cyanothece sp. (strain PCC 8801)) protein is GTP 3',8-cyclase.